The primary structure comprises 297 residues: Probable ABC transporter phosphite binding protein PhnD1 (297 aa).

The N-terminal stretch at 1–24 (MFNLKYFLVSSSLLFSVFSSPVFS) is a signal peptide.

This sequence belongs to the phosphate/phosphite/phosphonate binding protein family. The complex may be composed of two ATP-binding proteins (PhnC1), two transmembrane proteins (PhnE1) and a solute-binding protein (PhnD1).

It localises to the periplasm. In terms of biological role, probably part of the ABC transporter complex PhnD1C1E1. Binds strongly to inorganic phosphite and with very weak affinities to methylphosphonate (MPn) and phosphate. The polypeptide is Probable ABC transporter phosphite binding protein PhnD1 (Prochlorococcus marinus (strain MIT 9301)).